Here is a 221-residue protein sequence, read N- to C-terminus: MEDGPLPDLRDIELKLGRKVPESLARSLRGEEPAPREGAADPSGVGGSCSSSSSCSSFAPSVSSSSSSSPASGSPRRSHPSALERLETKLHILRQEMVNLRATDVRLMRQLLLINESIESIKWMIEEKATVTSRGSSLSGSLCSLLESQSTSLRGSYNSLHDGSDGLDGISVGSYLDTLADDVPGHQTPSDLDQFSDSSIIEDSQALHKHPKLDSEYYCFG.

At Met-1 the chain carries N-acetylmethionine. The disordered stretch occupies residues 1–81 (MEDGPLPDLR…SGSPRRSHPS (81 aa)). Basic and acidic residues-rich tracts occupy residues 8–21 (DLRD…RKVP) and 28–39 (LRGEEPAPREGA). Positions 48-75 (SCSSSSSCSSFAPSVSSSSSSSPASGSP) are enriched in low complexity.

The protein is Leucine rich adaptor protein 1-like (Lurap1l) of Rattus norvegicus (Rat).